We begin with the raw amino-acid sequence, 852 residues long: Phenylalanine--tRNA ligase beta subunit (852 aa).

Residues 44-159 (PETTGPLVIG…DADLASANLK (116 aa)) form the tRNA-binding domain. In terms of domain architecture, B5 spans 428–510 (PEMPMITIHT…RLEGLEDIPS (83 aa)). Mg(2+) is bound by residues D488, D494, E497, and E498. The FDX-ACB domain occupies 758-851 (SAFPAVLQDI…ATEKVGAQLR (94 aa)).

The protein belongs to the phenylalanyl-tRNA synthetase beta subunit family. Type 1 subfamily. In terms of assembly, tetramer of two alpha and two beta subunits. Mg(2+) is required as a cofactor.

The protein localises to the cytoplasm. It catalyses the reaction tRNA(Phe) + L-phenylalanine + ATP = L-phenylalanyl-tRNA(Phe) + AMP + diphosphate + H(+). The chain is Phenylalanine--tRNA ligase beta subunit from Corynebacterium jeikeium (strain K411).